The chain runs to 222 residues: UPF0758 protein YicR (222 aa).

An MPN domain is found at 100–222 (PLLSPEMTRE…NVSFAERGWI (123 aa)). His-171, His-173, and Asp-184 together coordinate Zn(2+). Residues 171–184 (HNHPSGCAEPSKAD) carry the JAMM motif motif.

It belongs to the UPF0758 family. YicR subfamily.

In Shigella boydii serotype 18 (strain CDC 3083-94 / BS512), this protein is UPF0758 protein YicR.